The primary structure comprises 798 residues: MKFKYGAIVFSGLLGVSAILAACGTRGKFDQIDDGKIKLASSLTSKGAANALQAIVKKYNEVKKPGDYPIEITQIAGGYDQARVDLQSRVGVKDKTNFYNLILNYPDVVSVLARNQMELPFDGVDVSKISPNFLNFNERISGVSKKANYAIPVSVSTDILVLNGPVLHYILNSAKGESKGAQKDNKSAEVQRKSTGQKTVTQPLTIATDSATNGLWKKIEDAAKVNGKKKEEKKSTRSKRATEGTQTTKENTGGDAATSDTKIKESWGAYQEVEGGLKGYQFKAIVFENWHDLIDFSTRVAKSFSKVKDNSNKKGNEIQGVLGVDNSPNALLSSVFAAGNSDYNNFFYKVQNGRADFSNFNNKGSSYKNLKNVFNDYKNLIAQNGLYVNKGGSYSSNFQKFHQLAYSISSTSGFAYSFAGQNSKRFKFTDDGTFVEYPSYTTEVNAPESNNGNDGKQQGQSDQGNLLGTFEVVDKSTSDIKVKPKTQAESKKSSDSKQTANTGKGSNSKQQTPKKTISLYKTKIPQDKTENVDAFLVTDSELISKLEKAKNKKEETKASGKSASARVAVQATQKKQSNEKQIVGYTTTSALSEDGKHIFKLGKLNSENYERKIIVGATVETLEQSTTLQSEEAIVLAAPGKYKDSDQKRVMITQGPNLIGVHANTKENEETKKFVNWFLNKTESWEVKGNGKDSQTTKSLTPAQYFAESASYILPLKETVEKDHKEQTNKNTYVAKALEMLKEVSENKSVSYSDPSDFRSGRFRDALGANFNATINSKANFEKFFQGFKAALGSDFDK.

An N-terminal signal peptide occupies residues 1 to 22 (MKFKYGAIVFSGLLGVSAILAA). Cys23 carries N-palmitoyl cysteine lipidation. Cys23 is lipidated: S-diacylglycerol cysteine. A compositionally biased stretch (basic and acidic residues) spans 178–192 (SKGAQKDNKSAEVQR). Disordered regions lie at residues 178-204 (SKGA…TQPL), 226-260 (NGKK…ATSD), 443-463 (EVNA…QSDQ), and 478-515 (SDIK…TPKK). The span at 193–204 (KSTGQKTVTQPL) shows a compositional bias: polar residues. Residues 226-235 (NGKKKEEKKS) show a composition bias toward basic and acidic residues. Positions 478–495 (SDIKVKPKTQAESKKSSD) are enriched in basic and acidic residues. The span at 496–515 (SKQTANTGKGSNSKQQTPKK) shows a compositional bias: polar residues.

The protein belongs to the MG185/MG260 family.

Its subcellular location is the cell membrane. This is an uncharacterized protein from Mycoplasma pneumoniae (strain ATCC 29342 / M129 / Subtype 1) (Mycoplasmoides pneumoniae).